Here is a 273-residue protein sequence, read N- to C-terminus: Ribosomal RNA small subunit methyltransferase A (273 aa).

S-adenosyl-L-methionine-binding residues include asparagine 18, leucine 20, glycine 45, glutamate 66, aspartate 91, and asparagine 113.

This sequence belongs to the class I-like SAM-binding methyltransferase superfamily. rRNA adenine N(6)-methyltransferase family. RsmA subfamily.

The protein resides in the cytoplasm. It catalyses the reaction adenosine(1518)/adenosine(1519) in 16S rRNA + 4 S-adenosyl-L-methionine = N(6)-dimethyladenosine(1518)/N(6)-dimethyladenosine(1519) in 16S rRNA + 4 S-adenosyl-L-homocysteine + 4 H(+). Its function is as follows. Specifically dimethylates two adjacent adenosines (A1518 and A1519) in the loop of a conserved hairpin near the 3'-end of 16S rRNA in the 30S particle. May play a critical role in biogenesis of 30S subunits. In Escherichia coli O81 (strain ED1a), this protein is Ribosomal RNA small subunit methyltransferase A.